The following is a 335-amino-acid chain: MKYLILAALVAVTAGLVIPLVPKTQEAITEYVNSKQSLWKAEIPKDITIEQVKKRLMRTEFVAPHTPDVEVVKHDINEDTIPATFDARTQWPNCMSINNIRDQSDCGSCWAFAAAEAASDRFCIASNGAVNTLLSAEDVLSCCSNCGYGCEGGYPINAWKYLVKSGFCTGGSYEAQFGCKPYSLAPCGETVGNVTWPSCPDDGYDTPACVNKCTNKNYNVAYTADKHFGSTAYAVGKKVSQIQAEIIAHGPVEAAFTVYEDFYQYKTGVYVHTTGQELGGHAIRILGWGTDNGTPYWLVANSWNVNWGENGYFRIIRGTNECGIEHAVVGGVPKV.

The first 15 residues, 1–15, serve as a signal peptide directing secretion; sequence MKYLILAALVAVTAG. A propeptide spanning residues 16–80 is cleaved from the precursor; it reads LVIPLVPKTQ…VVKHDINEDT (65 aa). 6 disulfides stabilise this stretch: Cys-94-Cys-123, Cys-106-Cys-150, Cys-142-Cys-209, Cys-143-Cys-146, Cys-179-Cys-213, and Cys-187-Cys-199. Cys-109 is a catalytic residue. Asn-193 carries N-linked (GlcNAc...) asparagine glycosylation. Active-site residues include His-281 and Asn-301.

It belongs to the peptidase C1 family.

The protein resides in the secreted. Thiol protease which shows activity against the fluorogenic substrate z-Arg-Arg-AMC. The sequence is that of Cathepsin B-like cysteine proteinase 4 (cpr-4) from Caenorhabditis elegans.